A 142-amino-acid polypeptide reads, in one-letter code: Universal stress protein G (142 aa).

This sequence belongs to the universal stress protein A family.

The polypeptide is Universal stress protein G (uspG) (Shigella flexneri).